We begin with the raw amino-acid sequence, 199 residues long: NAD(P)H dehydrogenase (quinone) (199 aa).

Residues 4 to 190 (VLVLYYSTYG…EGARHQGELI (187 aa)) enclose the Flavodoxin-like domain. FMN contacts are provided by residues 10-15 (STYGHV) and 78-80 (TRF). Residue Tyr12 participates in NAD(+) binding. Substrate is bound at residue Trp98. Residues 113 to 119 (STATQHG) and His134 each bind FMN.

This sequence belongs to the WrbA family. It depends on FMN as a cofactor.

The enzyme catalyses a quinone + NADH + H(+) = a quinol + NAD(+). It carries out the reaction a quinone + NADPH + H(+) = a quinol + NADP(+). This chain is NAD(P)H dehydrogenase (quinone), found in Cupriavidus metallidurans (strain ATCC 43123 / DSM 2839 / NBRC 102507 / CH34) (Ralstonia metallidurans).